Consider the following 418-residue polypeptide: DnaJ protein homolog 2 (418 aa).

A J domain is found at 11-76 (NTKYYEVLGV…REIYDQYGEE (66 aa)). The CR-type zinc finger occupies 135 to 219 (GTSKKLSLSR…CKGEKVVQQK (85 aa)). CXXCXGXG motif repeat units lie at residues 148 to 155 (CTKCKGKG), 164 to 171 (CASCQGSG), 191 to 198 (CNECKGTG), and 207 to 214 (CPQCKGEK). The interval 382-418 (VNIEEEMRRKQHQQAQEAYDEDDEGHGGAQRVQCAQQ) is disordered. Cys415 carries the cysteine methyl ester modification. A lipid anchor (S-farnesyl cysteine) is attached at Cys415. Residues 416–418 (AQQ) constitute a propeptide, removed in mature form.

Its subcellular location is the membrane. Functionally, plays a continuous role in plant development probably in the structural organization of compartments. The chain is DnaJ protein homolog 2 (LDJ2) from Allium porrum (Leek).